A 239-amino-acid chain; its full sequence is Phosducin-like protein 3 (239 aa).

A disordered region spans residues 16–37 (KKGILPPKETPVEEEEDEQLHL). The Phosducin domain occupies 28–201 (EEEEDEQLHL…LEWRLSESGA (174 aa)). Residue Ser-41 is modified to Phosphoserine. A thioredoxin fold region spans residues 89-239 (FGELKEISGQ…RDGEEDSDED (151 aa)). Over residues 217 to 227 (QLMTSIRCSAN) the composition is skewed to polar residues. The tract at residues 217–239 (QLMTSIRCSANTHRDGEEDSDED) is disordered.

It belongs to the phosducin family. In terms of assembly, interacts (via thioredoxin fold region) with kdr/vegfr2 (via juxtamembrane domain). Expressed in endothelial cells.

Its subcellular location is the cytoplasm. It is found in the perinuclear region. It localises to the endoplasmic reticulum. Acts as a chaperone for the angiogenic VEGF receptor KDR/VEGFR2, increasing its abundance by inhibiting its ubiquitination and degradation. Inhibits the folding activity of the chaperonin-containing T-complex (CCT) which leads to inhibition of cytoskeletal actin folding. Acts as a chaperone during heat shock alongside HSP90 and HSP40/70 chaperone complexes. Modulates the activation of caspases during apoptosis. The protein is Phosducin-like protein 3 of Danio rerio (Zebrafish).